Reading from the N-terminus, the 635-residue chain is Threonine--tRNA ligase (635 aa).

The TGS domain maps to 1–61 (MINIKFPDGS…NHDCELRLIT (61 aa)). Residues 242 to 533 (DHRKIGKALD…LIEHYAGNMP (292 aa)) form a catalytic region. Zn(2+)-binding residues include Cys-333, His-384, and His-510.

Belongs to the class-II aminoacyl-tRNA synthetase family. In terms of assembly, homodimer. Zn(2+) serves as cofactor.

Its subcellular location is the cytoplasm. The enzyme catalyses tRNA(Thr) + L-threonine + ATP = L-threonyl-tRNA(Thr) + AMP + diphosphate + H(+). Functionally, catalyzes the attachment of threonine to tRNA(Thr) in a two-step reaction: L-threonine is first activated by ATP to form Thr-AMP and then transferred to the acceptor end of tRNA(Thr). Also edits incorrectly charged L-seryl-tRNA(Thr). The sequence is that of Threonine--tRNA ligase from Francisella philomiragia subsp. philomiragia (strain ATCC 25017 / CCUG 19701 / FSC 153 / O#319-036).